The primary structure comprises 318 residues: Aldehyde oxidoreductase FAD-binding subunit PaoB (318 aa).

One can recognise an FAD-binding PCMH-type domain in the interval 1–223 (MKAFTYERVN…VAVTLPPPLG (223 aa)). Residues 26 to 34 (KFIAGGTNL) and Thr108 contribute to the FAD site. 4 residues coordinate [4Fe-4S] cluster: Cys119, Cys129, Cys138, and Cys157. Positions 164, 213, and 230 each coordinate FAD.

Heterotrimer composed of PaoA, PaoB and PaoC. It depends on FAD as a cofactor. Requires [4Fe-4S] cluster as cofactor.

It localises to the periplasm. The catalysed reaction is an aldehyde + A + H2O = a carboxylate + AH2 + H(+). The complex requires PaoD for activity. Its function is as follows. Oxidizes aldehydes to the corresponding carboxylic acids with a preference for aromatic aldehydes. It might play a role in the detoxification of aldehydes to avoid cell damage. In Escherichia coli (strain K12), this protein is Aldehyde oxidoreductase FAD-binding subunit PaoB.